The following is a 270-amino-acid chain: L-fucose dehydrogenase (270 aa).

Residues arginine 19, isoleucine 21, aspartate 40, lysine 41, aspartate 62, valine 63, asparagine 89, tyrosine 154, lysine 158, isoleucine 187, threonine 189, and leucine 191 each coordinate NAD(+). Tyrosine 154 serves as the catalytic Proton acceptor.

This sequence belongs to the short-chain dehydrogenases/reductases (SDR) family. In terms of assembly, homotetramer. As to expression, detected in retina.

The protein localises to the cytoplasm. The enzyme catalyses L-fucose + NAD(+) = L-fucono-1,5-lactone + NADH + H(+). It catalyses the reaction D-arabinose + NAD(+) = D-arabinono-1,5-lactone + NADH + H(+). It carries out the reaction L-galactose + NAD(+) = L-galactono-1,5-lactone + NADH + H(+). The protein operates within carbohydrate degradation; L-fucose degradation. Functionally, catalyzes the NAD(+)-dependent oxidation of L-fucose, yielding L-fucono-1,5-lactone, which rapidly converts spontaneously to L-fucone-1,4-lactone. Can also act on D-arabinose and L-galactose, with lower catalytic efficiency. Does not use NADPH. May be the initial enzyme of the putative L-fucose degradation pathway in mammals. The sequence is that of L-fucose dehydrogenase (HSD17B14) from Bos taurus (Bovine).